A 153-amino-acid polypeptide reads, in one-letter code: Small ribosomal subunit protein uS5 (153 aa).

In terms of domain architecture, S5 DRBM spans 15–78 (FQEVVVNVGR…DDAFKNLIHV (64 aa)).

This sequence belongs to the universal ribosomal protein uS5 family. Part of the 30S ribosomal subunit. Contacts proteins S4 and S8.

Its function is as follows. With S4 and S12 plays an important role in translational accuracy. Functionally, located at the back of the 30S subunit body where it stabilizes the conformation of the head with respect to the body. This Helicobacter acinonychis (strain Sheeba) protein is Small ribosomal subunit protein uS5.